Reading from the N-terminus, the 63-residue chain is Large ribosomal subunit protein bL28 (63 aa).

Belongs to the bacterial ribosomal protein bL28 family.

The protein is Large ribosomal subunit protein bL28 of Clostridium botulinum (strain ATCC 19397 / Type A).